A 197-amino-acid chain; its full sequence is Probable GTP-binding protein EngB (197 aa).

An EngB-type G domain is found at 25–197; it reads SAPEIAFAGR…VRDEFFKFTR (173 aa). GTP is bound by residues 33–40, 60–64, 79–82, 146–149, and 177–179; these read GRSNVGKS, GCTRQ, DLPG, TKID, and MSI. Residues serine 40 and threonine 62 each coordinate Mg(2+).

It belongs to the TRAFAC class TrmE-Era-EngA-EngB-Septin-like GTPase superfamily. EngB GTPase family. The cofactor is Mg(2+).

Its function is as follows. Necessary for normal cell division and for the maintenance of normal septation. The sequence is that of Probable GTP-binding protein EngB from Wolbachia sp. subsp. Drosophila simulans (strain wRi).